Here is a 372-residue protein sequence, read N- to C-terminus: NAD(P)H-quinone oxidoreductase subunit 1 (372 aa).

Transmembrane regions (helical) follow at residues 27 to 47 (LIWL…GVLV), 97 to 117 (LLFT…WLIV), 128 to 148 (VGVG…GLLM), 166 to 186 (AAQS…VVMM), 204 to 224 (ILSW…ICAL), 266 to 286 (VLSA…PVPV), 308 to 328 (ATGI…AILL), and 347 to 367 (FLLP…LAFP).

Belongs to the complex I subunit 1 family. As to quaternary structure, NDH-1 is composed of at least 11 different subunits.

It is found in the cellular thylakoid membrane. It catalyses the reaction a plastoquinone + NADH + (n+1) H(+)(in) = a plastoquinol + NAD(+) + n H(+)(out). The catalysed reaction is a plastoquinone + NADPH + (n+1) H(+)(in) = a plastoquinol + NADP(+) + n H(+)(out). NDH-1 shuttles electrons from an unknown electron donor, via FMN and iron-sulfur (Fe-S) centers, to quinones in the respiratory and/or the photosynthetic chain. The immediate electron acceptor for the enzyme in this species is believed to be plastoquinone. Couples the redox reaction to proton translocation, and thus conserves the redox energy in a proton gradient. This Synechococcus sp. (strain WH7803) protein is NAD(P)H-quinone oxidoreductase subunit 1.